The sequence spans 290 residues: 4-diphosphocytidyl-2-C-methyl-D-erythritol kinase (290 aa).

The active site involves lysine 13. 96–106 (PMGGGIGGGSS) is a binding site for ATP. The active site involves aspartate 138.

It belongs to the GHMP kinase family. IspE subfamily.

The enzyme catalyses 4-CDP-2-C-methyl-D-erythritol + ATP = 4-CDP-2-C-methyl-D-erythritol 2-phosphate + ADP + H(+). The protein operates within isoprenoid biosynthesis; isopentenyl diphosphate biosynthesis via DXP pathway; isopentenyl diphosphate from 1-deoxy-D-xylulose 5-phosphate: step 3/6. In terms of biological role, catalyzes the phosphorylation of the position 2 hydroxy group of 4-diphosphocytidyl-2C-methyl-D-erythritol. This is 4-diphosphocytidyl-2-C-methyl-D-erythritol kinase from Vibrio campbellii (strain ATCC BAA-1116).